The primary structure comprises 297 residues: Acetylglutamate kinase (297 aa).

Residues 68–69 (GG), arginine 90, and asparagine 195 each bind substrate.

This sequence belongs to the acetylglutamate kinase family. ArgB subfamily.

Its subcellular location is the cytoplasm. It carries out the reaction N-acetyl-L-glutamate + ATP = N-acetyl-L-glutamyl 5-phosphate + ADP. The protein operates within amino-acid biosynthesis; L-arginine biosynthesis; N(2)-acetyl-L-ornithine from L-glutamate: step 2/4. Catalyzes the ATP-dependent phosphorylation of N-acetyl-L-glutamate. This Mesorhizobium japonicum (strain LMG 29417 / CECT 9101 / MAFF 303099) (Mesorhizobium loti (strain MAFF 303099)) protein is Acetylglutamate kinase.